The chain runs to 204 residues: MLSLQFITHQTENYSYLESARMALEGGCKWIQLRMKEASPEEVEAVALQLKPLCKAKEAILILDDHVELAKKLEVDGVHLGKKDMPIGEARQMLGEAFIIGGTANTFEDVKLHHAAGADYLGIGPFRFTTTKINLSPVLGLEGYTSILAQMNEADIRIPVVAIGGIVAEDIPAIMETGVNGIALSGAILQAPDPVEETKRILNI.

4-amino-2-methyl-5-(diphosphooxymethyl)pyrimidine is bound by residues 32-36 (QLRMK) and Asp-64. Mg(2+)-binding residues include Asp-65 and Asp-84. A 4-amino-2-methyl-5-(diphosphooxymethyl)pyrimidine-binding site is contributed by Thr-103. Residue 129-131 (TTT) coordinates 2-[(2R,5Z)-2-carboxy-4-methylthiazol-5(2H)-ylidene]ethyl phosphate. Residue Lys-132 participates in 4-amino-2-methyl-5-(diphosphooxymethyl)pyrimidine binding. Gly-165 is a 2-[(2R,5Z)-2-carboxy-4-methylthiazol-5(2H)-ylidene]ethyl phosphate binding site.

The protein belongs to the thiamine-phosphate synthase family. Requires Mg(2+) as cofactor.

The enzyme catalyses 2-[(2R,5Z)-2-carboxy-4-methylthiazol-5(2H)-ylidene]ethyl phosphate + 4-amino-2-methyl-5-(diphosphooxymethyl)pyrimidine + 2 H(+) = thiamine phosphate + CO2 + diphosphate. It carries out the reaction 2-(2-carboxy-4-methylthiazol-5-yl)ethyl phosphate + 4-amino-2-methyl-5-(diphosphooxymethyl)pyrimidine + 2 H(+) = thiamine phosphate + CO2 + diphosphate. It catalyses the reaction 4-methyl-5-(2-phosphooxyethyl)-thiazole + 4-amino-2-methyl-5-(diphosphooxymethyl)pyrimidine + H(+) = thiamine phosphate + diphosphate. It participates in cofactor biosynthesis; thiamine diphosphate biosynthesis; thiamine phosphate from 4-amino-2-methyl-5-diphosphomethylpyrimidine and 4-methyl-5-(2-phosphoethyl)-thiazole: step 1/1. Functionally, condenses 4-methyl-5-(beta-hydroxyethyl)thiazole monophosphate (THZ-P) and 2-methyl-4-amino-5-hydroxymethyl pyrimidine pyrophosphate (HMP-PP) to form thiamine monophosphate (TMP). This chain is Thiamine-phosphate synthase, found in Bacteroides fragilis (strain YCH46).